The sequence spans 498 residues: Hexokinase-1 (498 aa).

Positions 39 to 492 (AAAQRVVAEL…SGLGAALVAA (454 aa)) constitute a Hexokinase domain. The segment at 95-233 (TGGEEGSYYA…GLDMRVSALI (139 aa)) is hexokinase small subdomain. Glycine 109, threonine 110, and asparagine 111 together coordinate ADP. Residues threonine 199, lysine 200, asparagine 234, and aspartate 235 each contribute to the D-glucose site. Residues 234 to 481 (NDTVGTLAAG…ERVVVKLASD (248 aa)) are hexokinase large subdomain. Threonine 258 serves as a coordination point for ADP. D-glucose-binding residues include asparagine 261, glutamate 290, and glutamate 321. Position 446 (glycine 446) interacts with ADP.

Belongs to the hexokinase family. As to expression, highly expressed in senescent leaves.

It carries out the reaction a D-hexose + ATP = a D-hexose 6-phosphate + ADP + H(+). It catalyses the reaction D-fructose + ATP = D-fructose 6-phosphate + ADP + H(+). The enzyme catalyses D-glucose + ATP = D-glucose 6-phosphate + ADP + H(+). It participates in carbohydrate metabolism; hexose metabolism. Its pathway is carbohydrate degradation; glycolysis; D-glyceraldehyde 3-phosphate and glycerone phosphate from D-glucose: step 1/4. Its function is as follows. Fructose and glucose phosphorylating enzyme. Acts as a positive regulator of leaf senescence by mediating glucose accumulation and inducing an increase in reactive oxygen species (ROS). This is Hexokinase-1 (HXK1) from Oryza sativa subsp. japonica (Rice).